Consider the following 148-residue polypeptide: Putative pre-16S rRNA nuclease (148 aa).

This sequence belongs to the YqgF nuclease family.

It is found in the cytoplasm. Its function is as follows. Could be a nuclease involved in processing of the 5'-end of pre-16S rRNA. The polypeptide is Putative pre-16S rRNA nuclease (Chlamydia muridarum (strain MoPn / Nigg)).